Consider the following 397-residue polypeptide: Phosphoglycerate kinase (397 aa).

Substrate is bound by residues aspartate 21–asparagine 23, arginine 37, histidine 60–arginine 63, arginine 119, and arginine 152. Residues lysine 203, glycine 294, glutamate 325, and glycine 354–serine 357 each bind ATP.

It belongs to the phosphoglycerate kinase family. Monomer.

Its subcellular location is the cytoplasm. It carries out the reaction (2R)-3-phosphoglycerate + ATP = (2R)-3-phospho-glyceroyl phosphate + ADP. It participates in carbohydrate degradation; glycolysis; pyruvate from D-glyceraldehyde 3-phosphate: step 2/5. The chain is Phosphoglycerate kinase from Chlorobium limicola (strain DSM 245 / NBRC 103803 / 6330).